The following is a 901-amino-acid chain: MSSPRPSTSSTSSDSGLSVDTTAYPEESKYTSTAPGAGGLSDENRYRDVEEGEAGADEPFLPSAKKQAASGSRTSRLIWGLVILCVAGWLWGLVLFVTQNRSAQQSVSEALQSHESGAISGSSSSGKPVTLEQVLTGQWLPRSHAVSWIAGPNGEDGLLVEQGEDQGKGYLRVDDIRSRKGDATSQESRVLMEKAIVQVDGRTIFPVSTWPSPNLNKVLLLSEREKNWRHSFTGKYWIFDVATQTAQPLDPSNPDGRVQLAIWSPTSDMVAFVRDNNLYLRKLSSKEVVPITKDGGADLFYGIPDWVYEEEVFSGNSVTWWSGDGKYVAFLRTNETAVPEFPVQYYLSRPSGKRPPPGLEDYPEVREIKYPKAGAPNPVVSLQFYDVEKQEVFSIEAPDNFEDDDRIIIEIVWGTEGKILVRATNRESDVLKVFLFDTKARTSKLVRVENVADIDGGWVEPTQYTWFIPADPSNGRPHDGYLDTVIHEGYEHLGYFTPLDNSEPILLTQGEWEVVDAPTAVDLRKGIVYFISTKESPTERHLYQVNLDGSNLKPLTDTSKPGYYDVSFSHGTGYALLSYRGPSIPWQAIVNTETDELKYEETIEDNAGLARMVDSYALPTEIYQNVTIDGFTLQVVERRPPHFNPAKKYPVLFYLYNGPRSQTVDRKFNIDFQSYVASSLGYIVVTVDGRGTGFSGRKTRCIVRGNLGYYEAYDQITTAKLWGEKPYVDETRMSIWGWSYGGFMTLKTLEQDAGQTFQYGMAVAPVTDWRHYDSIYTERYMHTPAHNPNGYDNTSITDMTALQQTVRFLVIHGASDDNVHIQNTLVLVDKLDLAGVQNYDLHFYPDSDHSINFHNAHRMVYERLSSWLVNAFNDEWHRIADPVPDDSMWEKVKRSLPMLVK.

A compositionally biased stretch (low complexity) spans 1–22 (MSSPRPSTSSTSSDSGLSVDTT). Residues 1–67 (MSSPRPSTSS…EPFLPSAKKQ (67 aa)) form a disordered region. The Cytoplasmic portion of the chain corresponds to 1 to 76 (MSSPRPSTSS…QAASGSRTSR (76 aa)). Residues 77-97 (LIWGLVILCVAGWLWGLVLFV) traverse the membrane as a helical; Signal-anchor for type II membrane protein segment. Over 98-901 (TQNRSAQQSV…VKRSLPMLVK (804 aa)) the chain is Vacuolar. N-linked (GlcNAc...) asparagine glycosylation is found at N334 and N625. S739 serves as the catalytic Charge relay system. An N-linked (GlcNAc...) asparagine glycan is attached at N793. Active-site charge relay system residues include D816 and H849.

This sequence belongs to the peptidase S9B family.

It localises to the vacuole membrane. The enzyme catalyses Release of an N-terminal dipeptide, Xaa-Yaa-|-Zaa-, from a polypeptide, preferentially when Yaa is Pro, provided Zaa is neither Pro nor hydroxyproline.. Functionally, type IV dipeptidyl-peptidase which removes N-terminal dipeptides sequentially from polypeptides having unsubstituted N-termini provided that the penultimate residue is proline. This chain is Probable dipeptidyl-aminopeptidase B (dapB), found in Aspergillus niger (strain ATCC MYA-4892 / CBS 513.88 / FGSC A1513).